The primary structure comprises 478 residues: Lysosome membrane protein 2 (478 aa).

The Cytoplasmic segment spans residues 1 to 4 (MGRC). Residues 5-27 (CFYTAGTLSLLLLVTSVTLLVAR) form a helical membrane-spanning segment. The Lumenal segment spans residues 28–433 (VFQKAVDQTI…QLKSVINTTL (406 aa)). N-linked (GlcNAc...) asparagine glycans are attached at residues asparagine 45, asparagine 68, asparagine 105, and asparagine 122. An important for interaction with GBA1 region spans residues 155-191 (LIEAMLKAYQQKLFVIHTVHELLWGYKDEILSLVHIF). Residues asparagine 206, asparagine 224, asparagine 249, and asparagine 304 are each glycosylated (N-linked (GlcNAc...) asparagine). 2 disulfide bridges follow: cysteine 274-cysteine 329 and cysteine 312-cysteine 318. N-linked (GlcNAc...) asparagine glycans are attached at residues asparagine 325, asparagine 412, and asparagine 430. The helical transmembrane segment at 434–459 (VVTNIPYIIMALGVFFGLVFTWLACR) threads the bilayer. Residues 460–478 (GQGSMDEGTADERAPLIRT) lie on the Cytoplasmic side of the membrane.

This sequence belongs to the CD36 family. As to quaternary structure, interacts with GBA1. Post-translationally, acylated by palmitic acid group(s). Heavily glycosylated. As to expression, detected in the extracts of brain, heart, lung, liver and kidney.

The protein localises to the lysosome membrane. In terms of biological role, acts as a lysosomal receptor for glucosylceramidase (GBA1) targeting. This Mus musculus (Mouse) protein is Lysosome membrane protein 2 (Scarb2).